Consider the following 130-residue polypeptide: Protein ApaG (130 aa).

Residues 3-127 enclose the ApaG domain; that stretch reads RALTRDIEVT…FSLDTPDLRR (125 aa).

The protein is Protein ApaG of Allorhizobium ampelinum (strain ATCC BAA-846 / DSM 112012 / S4) (Agrobacterium vitis (strain S4)).